The chain runs to 937 residues: Diacylglycerol kinase theta (937 aa).

The tract at residues 1–48 (MATAAESGARTWPGSGSPRLGSPAGSPVLGISGRARPGSGPERTGRAI) is disordered. S22 and S26 each carry phosphoserine. Phorbol-ester/DAG-type zinc fingers lie at residues 54 to 102 (GHSF…KTPC), 115 to 162 (AHCF…CSDC), and 177 to 228 (HHHW…TPEC). The interval 359–378 (GKAGTTEEETSKDSGPGDSV) is disordered. Residues 390–489 (TQEILKIYPD…TRFYVAEARA (100 aa)) enclose the Ras-associating domain. 2 short sequence motifs (LXXLL motif) span residues 550–554 (LYMLA) and 569–573 (LPDVL). A DAGKc domain is found at 579-716 (PDCCPLLVFV…MDRWTILLDA (138 aa)). Positions 911-937 (AKQKPRKAGAIRDTRVDTLPAPEGNPL) are disordered.

This sequence belongs to the eukaryotic diacylglycerol kinase family. As to quaternary structure, interacts with RHOA (constitutively activated, GTP-bound); the interaction inhibits DGKQ. Interacts with PRKCE. Interacts with PRKCH. Interacts with PLCB1. Interacts with NR5A1; the interaction requires both LXXLL motifs in DGKQ and is required for full phosphatidic acid-mediated activation of NR5A1. Post-translationally, phosphorylated by PRKCE and PRKCH in vitro. As to expression, widely expressed with higher expression in the brain and, to a lesser extent, in the small intestine, duodenum, and liver. In brain, expressed in gray matter. Expression is most intense in the cerebellar cortex and hippocampus, while moderate expression is seen in the olfactory bulb neuronal layers and brain stem nuclei. In the cerebellar cortex, equally expressed in both the Purkinje cell somata and the granule cells.

It is found in the cytoplasm. It localises to the cytosol. The protein localises to the cell membrane. The protein resides in the synapse. Its subcellular location is the cytoskeleton. It is found in the nucleus. It localises to the nucleus speckle. The protein localises to the nucleus matrix. It carries out the reaction a 1,2-diacyl-sn-glycerol + ATP = a 1,2-diacyl-sn-glycero-3-phosphate + ADP + H(+). The catalysed reaction is a 1-O-alkyl-sn-glycerol + ATP = a 1-O-alkyl-sn-glycero-3-phosphate + ADP + H(+). The enzyme catalyses 1-O-alkyl-2-acyl-sn-glycerol + ATP = 1-O-alkyl-2-acyl-sn-glycero-3-phosphate + ADP + H(+). It catalyses the reaction 1,2-di-(9Z-octadecenoyl)-sn-glycerol + ATP = 1,2-di-(9Z-octadecenoyl)-sn-glycero-3-phosphate + ADP + H(+). It carries out the reaction 1-O-hexadecyl-sn-glycerol + ATP = 1-O-hexadecyl-sn-glycero-3-phosphate + ADP + H(+). The catalysed reaction is 1-O-hexadecyl-2-acetyl-sn-glycerol + ATP = 1-O-hexadecyl-2-acetyl-sn-glycero-3-phosphate + ADP + H(+). The enzyme catalyses 1-octadecanoyl-2-(5Z,8Z,11Z,14Z-eicosatetraenoyl)-sn-glycerol + ATP = 1-octadecanoyl-2-(5Z,8Z,11Z,14Z-eicosatetraenoyl)-sn-glycero-3-phosphate + ADP + H(+). It functions in the pathway lipid metabolism; glycerolipid metabolism. Activated by phosphatidylserine. In terms of biological role, diacylglycerol kinase that converts diacylglycerol/DAG into phosphatidic acid/phosphatidate/PA and regulates the respective levels of these two bioactive lipids. Thereby, acts as a central switch between the signaling pathways activated by these second messengers with different cellular targets and opposite effects in numerous biological processes. Within the adrenocorticotropic hormone signaling pathway, produces phosphatidic acid which in turn activates NR5A1 and subsequent steroidogenic gene transcription. Also functions downstream of the nerve growth factor signaling pathway being specifically activated in the nucleus by the growth factor. Through its diacylglycerol activity also regulates synaptic vesicle endocytosis. The protein is Diacylglycerol kinase theta of Rattus norvegicus (Rat).